The sequence spans 359 residues: Holliday junction branch migration complex subunit RuvB (359 aa).

The disordered stretch occupies residues 1–22 (MAIVSSNAEPSKGAPRPKPSRV). Positions 13–204 (GAPRPKPSRV…FGLIQRLEFY (192 aa)) are large ATPase domain (RuvB-L). ATP contacts are provided by Leu43, Arg44, Gly85, Lys88, Thr89, Thr90, Arg194, Tyr204, and Arg241. Thr89 is a binding site for Mg(2+). The small ATPAse domain (RuvB-S) stretch occupies residues 205-276 (GQEDLQAIVM…LVDEALTLHR (72 aa)). Residues 279 to 359 (GKGLDASDRR…GWPADEGDAA (81 aa)) are head domain (RuvB-H). The DNA site is built by Arg334 and Arg339.

Belongs to the RuvB family. As to quaternary structure, homohexamer. Forms an RuvA(8)-RuvB(12)-Holliday junction (HJ) complex. HJ DNA is sandwiched between 2 RuvA tetramers; dsDNA enters through RuvA and exits via RuvB. An RuvB hexamer assembles on each DNA strand where it exits the tetramer. Each RuvB hexamer is contacted by two RuvA subunits (via domain III) on 2 adjacent RuvB subunits; this complex drives branch migration. In the full resolvosome a probable DNA-RuvA(4)-RuvB(12)-RuvC(2) complex forms which resolves the HJ.

Its subcellular location is the cytoplasm. The enzyme catalyses ATP + H2O = ADP + phosphate + H(+). The RuvA-RuvB-RuvC complex processes Holliday junction (HJ) DNA during genetic recombination and DNA repair, while the RuvA-RuvB complex plays an important role in the rescue of blocked DNA replication forks via replication fork reversal (RFR). RuvA specifically binds to HJ cruciform DNA, conferring on it an open structure. The RuvB hexamer acts as an ATP-dependent pump, pulling dsDNA into and through the RuvAB complex. RuvB forms 2 homohexamers on either side of HJ DNA bound by 1 or 2 RuvA tetramers; 4 subunits per hexamer contact DNA at a time. Coordinated motions by a converter formed by DNA-disengaged RuvB subunits stimulates ATP hydrolysis and nucleotide exchange. Immobilization of the converter enables RuvB to convert the ATP-contained energy into a lever motion, pulling 2 nucleotides of DNA out of the RuvA tetramer per ATP hydrolyzed, thus driving DNA branch migration. The RuvB motors rotate together with the DNA substrate, which together with the progressing nucleotide cycle form the mechanistic basis for DNA recombination by continuous HJ branch migration. Branch migration allows RuvC to scan DNA until it finds its consensus sequence, where it cleaves and resolves cruciform DNA. This chain is Holliday junction branch migration complex subunit RuvB, found in Synechococcus sp. (strain CC9311).